Consider the following 306-residue polypeptide: Palmitoyl-protein thioesterase ABHD10, mitochondrial (306 aa).

The N-terminal 52 residues, 1 to 52 (MAGVGLAAVPAWVPCRRWGLAAVTFGFHHGLSTLLARKTERAPQWLRACRHK), are a transit peptide targeting the mitochondrion. Residues 78–177 (IIFIPGYISN…KVVALVGVAT (100 aa)) enclose the AB hydrolase-1 domain. Catalysis depends on charge relay system residues S152, D249, and H279.

The protein belongs to the AB hydrolase superfamily.

The protein localises to the mitochondrion. The catalysed reaction is S-hexadecanoyl-L-cysteinyl-[protein] + H2O = L-cysteinyl-[protein] + hexadecanoate + H(+). It catalyses the reaction mycophenolic acid O-acyl-beta-D-glucuronide + H2O = mycophenolate + D-glucuronate + H(+). Its activity is regulated as follows. Inhibited by palmostatin-B. Functionally, acts as an acyl-protein thioesterase that hydrolyzes fatty acids from acylated residues in proteins. Regulates the mitochondrial S-depalmitoylation of the nucleophilic active site residue of peroxiredoxin-5/PRDX5, a key antioxidant protein, therefore modulating mitochondrial antioxidant ability. Also catalyzes the deglucuronidation of mycophenolic acid acyl-glucuronide, an active metabolite of the immunosuppressant drug mycophenolate. This chain is Palmitoyl-protein thioesterase ABHD10, mitochondrial (ABHD10), found in Bos taurus (Bovine).